The following is a 394-amino-acid chain: Phosphoglycerate kinase (394 aa).

Substrate contacts are provided by residues 21-23, arginine 36, 59-62, arginine 118, and arginine 151; these read DFN and HLGR. Position 183 is a phosphoserine (serine 183). Lysine 201 lines the ATP pocket. Threonine 299 is subject to Phosphothreonine. Residues glutamate 323 and 350–353 each bind ATP; that span reads GGDS.

Belongs to the phosphoglycerate kinase family. Monomer.

It is found in the cytoplasm. The catalysed reaction is (2R)-3-phosphoglycerate + ATP = (2R)-3-phospho-glyceroyl phosphate + ADP. The protein operates within carbohydrate degradation; glycolysis; pyruvate from D-glyceraldehyde 3-phosphate: step 2/5. The sequence is that of Phosphoglycerate kinase from Shouchella clausii (strain KSM-K16) (Alkalihalobacillus clausii).